A 550-amino-acid chain; its full sequence is Mycosin-2 (550 aa).

A signal peptide spans 1 to 33 (MASPLNRPGLRAAAASAALTLVALSANVPAAQA). The segment at 34–62 (IPPPSVDPAMVPADARPGPDQPMRRSNSC) is disordered. One can recognise a Peptidase S8 domain in the interval 79 to 490 (GFNLVNISKA…YGLVDPVAAL (412 aa)). Catalysis depends on charge relay system residues aspartate 103 and histidine 133. Residues 168–190 (PPVTAAPAPPVEVPPPMPPPPPV) show a composition bias toward pro residues. Positions 168-236 (PPVTAAPAPP…PPPPPGAPDG (69 aa)) are disordered. Serine 435 functions as the Charge relay system in the catalytic mechanism. A helical membrane pass occupies residues 524–544 (NIAIGFVGAVATGVLAMAIGA).

Belongs to the peptidase S8 family.

It localises to the cell membrane. This Mycobacterium tuberculosis (strain ATCC 25618 / H37Rv) protein is Mycosin-2.